Reading from the N-terminus, the 257-residue chain is Peptide methionine sulfoxide reductase (257 aa).

Residues 61–88 are disordered; the sequence is LGFGSRPQPDPAASSAIAQGPDDDVPSP. Ser244 carries the post-translational modification Phosphoserine.

The protein belongs to the MsrA Met sulfoxide reductase family.

It catalyses the reaction L-methionyl-[protein] + [thioredoxin]-disulfide + H2O = L-methionyl-(S)-S-oxide-[protein] + [thioredoxin]-dithiol. It carries out the reaction [thioredoxin]-disulfide + L-methionine + H2O = L-methionine (S)-S-oxide + [thioredoxin]-dithiol. Functionally, has an important function as a repair enzyme for proteins that have been inactivated by oxidation. Catalyzes the reversible oxidation-reduction of methionine sulfoxide in proteins to methionine. The polypeptide is Peptide methionine sulfoxide reductase (PMSR) (Brassica napus (Rape)).